The chain runs to 138 residues: Large ribosomal subunit protein uL14 (138 aa).

Belongs to the universal ribosomal protein uL14 family. Part of the 50S ribosomal subunit. Forms a cluster with proteins L3 and L24e, part of which may contact the 16S rRNA in 2 intersubunit bridges.

Binds to 23S rRNA. Forms part of two intersubunit bridges in the 70S ribosome. This is Large ribosomal subunit protein uL14 from Hyperthermus butylicus (strain DSM 5456 / JCM 9403 / PLM1-5).